The chain runs to 101 residues: Cell division suppressor protein YneA (101 aa).

Residues 35-86 enclose the LysM domain; that stretch reads MTVTVASGDTLWGLAKQYEPAHGLSPDEFIRWVVDVNRLPSSRLTAGEQIVI.

It belongs to the YneA family.

The protein resides in the cytoplasm. In terms of biological role, inhibits cell division during the SOS response. Affects a later stage of the cell division protein assembly, after the assembly of the Z ring, by probably suppressing recruitment of FtsL and/or DivIC to the division machinery. In Geobacillus thermodenitrificans (strain NG80-2), this protein is Cell division suppressor protein YneA.